The following is a 322-amino-acid chain: Ferredoxin--NADP reductase (322 aa).

Positions 87, 119, 279, and 320 each coordinate FAD.

This sequence belongs to the ferredoxin--NADP reductase type 2 family. In terms of assembly, homodimer. It depends on FAD as a cofactor.

It catalyses the reaction 2 reduced [2Fe-2S]-[ferredoxin] + NADP(+) + H(+) = 2 oxidized [2Fe-2S]-[ferredoxin] + NADPH. This Streptococcus suis (strain 98HAH33) protein is Ferredoxin--NADP reductase.